A 906-amino-acid polypeptide reads, in one-letter code: Gamma-tubulin complex component 3 homolog (906 aa).

Residues 208-229 (GQQPSQQSTTTKGLPNTVSRNV) show a composition bias toward polar residues. The interval 208–242 (GQQPSQQSTTTKGLPNTVSRNVPRTRREGDSSGSV) is disordered.

Belongs to the TUBGCP family. In terms of assembly, interacts with gamma-tubulin.

The protein resides in the cytoplasm. The protein localises to the cytoskeleton. It localises to the microtubule organizing center. It is found in the centrosome. Its function is as follows. Necessary for the recruitment of gamma-tubulin to the centrosome and for the formation of a functional centrosome. The polypeptide is Gamma-tubulin complex component 3 homolog (tubgcp3) (Xenopus laevis (African clawed frog)).